Reading from the N-terminus, the 359-residue chain is 3-dehydroquinate synthase (359 aa).

Residues 72–77 (EGEEHK), 106–110 (GVVGD), 130–131 (TT), Lys-143, Lys-152, and 170–173 (TLTT) contribute to the NAD(+) site. 3 residues coordinate Zn(2+): Glu-185, His-248, and His-265.

Belongs to the sugar phosphate cyclases superfamily. Dehydroquinate synthase family. Co(2+) is required as a cofactor. Requires Zn(2+) as cofactor. It depends on NAD(+) as a cofactor.

Its subcellular location is the cytoplasm. It carries out the reaction 7-phospho-2-dehydro-3-deoxy-D-arabino-heptonate = 3-dehydroquinate + phosphate. Its pathway is metabolic intermediate biosynthesis; chorismate biosynthesis; chorismate from D-erythrose 4-phosphate and phosphoenolpyruvate: step 2/7. Catalyzes the conversion of 3-deoxy-D-arabino-heptulosonate 7-phosphate (DAHP) to dehydroquinate (DHQ). The protein is 3-dehydroquinate synthase of Pelobacter propionicus (strain DSM 2379 / NBRC 103807 / OttBd1).